A 161-amino-acid chain; its full sequence is Allophycocyanin beta chain (161 aa).

N4-methylasparagine is present on Asn71. Residue Cys81 participates in (2R,3E)-phycocyanobilin binding.

The protein belongs to the phycobiliprotein family. As to quaternary structure, heterodimer of an alpha and a beta chain. In terms of processing, contains one covalently linked phycocyanobilin chromophore.

The protein resides in the cellular thylakoid membrane. Light-harvesting photosynthetic bile pigment-protein from the phycobiliprotein complex. Allophycocyanin has a maximum absorption at approximately 650 nanometers. The protein is Allophycocyanin beta chain (apcB) of Anabaena cylindrica.